The following is a 498-amino-acid chain: Excisase C (498 aa).

Residues 263–446 (KIIYSFDLFE…FGIENRKKAF (184 aa)) enclose the Tyr recombinase domain. Residues Arg306, Lys336, Arg401, and His424 contribute to the active site. The O-(3'-phospho-DNA)-tyrosine intermediate role is filled by Tyr433.

Belongs to the XisA/XisC recombinase family.

Essential for DNA excision. Site specific recombinase necessary for the excision of the 10.5 kb hupL element during heterocyst differentiation. In Nostoc sp. (strain PCC 7120 / SAG 25.82 / UTEX 2576), this protein is Excisase C (xisC).